Reading from the N-terminus, the 198-residue chain is Recombination protein RecR (198 aa).

Residues 56–71 form a C4-type zinc finger; that stretch reads CTTCGNIDTHDPCAIC. The Toprim domain occupies 79 to 174; sequence RSLCVVEEVS…RLTQLAHGLP (96 aa).

The protein belongs to the RecR family.

Its function is as follows. May play a role in DNA repair. It seems to be involved in an RecBC-independent recombinational process of DNA repair. It may act with RecF and RecO. In Sphingopyxis alaskensis (strain DSM 13593 / LMG 18877 / RB2256) (Sphingomonas alaskensis), this protein is Recombination protein RecR.